Consider the following 128-residue polypeptide: Modulator protein MzrA (128 aa).

Topologically, residues methionine 1–valine 13 are cytoplasmic. A helical transmembrane segment spans residues leucine 14–phenylalanine 34. Topologically, residues arginine 35–glycine 128 are periplasmic.

This sequence belongs to the MzrA family. Interacts with EnvZ.

The protein localises to the cell inner membrane. Its function is as follows. Modulates the activity of the EnvZ/OmpR two-component regulatory system, probably by directly modulating EnvZ enzymatic activity and increasing stability of phosphorylated OmpR. In Erwinia billingiae (strain Eb661), this protein is Modulator protein MzrA.